Consider the following 37-residue polypeptide: Large ribosomal subunit protein bL36c (37 aa).

It belongs to the bacterial ribosomal protein bL36 family.

It localises to the plastid. The protein resides in the chloroplast. In Oenothera argillicola (Appalachian evening primrose), this protein is Large ribosomal subunit protein bL36c.